Consider the following 477-residue polypeptide: E3 ubiquitin-protein ligase TRIM17 (477 aa).

Residues 16 to 66 form an RING-type zinc finger; that stretch reads CSICLDYFTDPVMTACGHNFCRECIQMSWEKGKVKKGKKKQKGSFPCPECR. Residues 94–135 form a B box-type zinc finger; sequence QKRDLCQAHQEPLKLFCQDDQSPICVVCREAQEHRMHRVLPL. Positions 99, 102, 121, and 127 each coordinate Zn(2+). Residues 135-226 are a coiled coil; that stretch reads LDEAAREYKL…KLQDSKASLD (92 aa). One can recognise a B30.2/SPRY domain in the interval 276-475; that stretch reads AIKTLCRVPG…MVISTVTMWV (200 aa).

Belongs to the TRIM/RBCC family. Interacts (via coiled coil) with TRIM44 (via coiled coil). Interacts with TRIM28; this interaction prevents TRIM28 activity on BCL2A1. Interacts with TRIM41; this interaction prevents TRIM41 activity on ZSCAN2. Interacts with BECN1. Interacts with NFATC3 and NFATC4; these interactions prevent NFATC3 and NFATC4 nuclear localization. In terms of processing, auto-ubiquitinated. In terms of tissue distribution, almost exclusively in the testis.

Its subcellular location is the cytoplasm. It is found in the lysosome. It carries out the reaction S-ubiquitinyl-[E2 ubiquitin-conjugating enzyme]-L-cysteine + [acceptor protein]-L-lysine = [E2 ubiquitin-conjugating enzyme]-L-cysteine + N(6)-ubiquitinyl-[acceptor protein]-L-lysine.. It participates in protein modification; protein ubiquitination. Functionally, E3 ubiquitin ligase that plays important roles in the regulation of neuronal apoptosis, selective autophagy or cell proliferation. Stimulates the degradation of kinetochore ZW10 interacting protein ZWINT in a proteasome-dependent manner, leading to negative regulation of cell proliferation. Inhibits autophagic degradation of diverse known targets while contributing to autophagy of midbodies. Autophagy-inhibitory activity involves MCL1, which TRIM17 assembles into complexes with the key autophagy regulator BECN1. Controls neuronal apoptosis by mediating ubiquitination and degradation of MCL1 to initiate neuronal death. In addition, regulates NFAT transcription factors NFATC3 and NFATC4 activities by preventing their nuclear localization, thus inhibiting their transcriptional activities. Decreases TRIM41-mediated degradation of ZSCAN2 thereby stimulating alpha-synuclein/SNCA transcription in neuronal cells. Prevents the E3 ubiquitin-ligase activity of TRIM28 and its interaction with anti-apoptotic BCL2A1, blocking TRIM28 from ubiquitinating BCL2A1. The sequence is that of E3 ubiquitin-protein ligase TRIM17 (Trim17) from Mus musculus (Mouse).